The following is a 224-amino-acid chain: uncharacterized protein (224 aa).

Residues 44–139 are compositionally biased toward pro residues; that stretch reads TSPPIVPLPT…PSPPPSPSPL (96 aa). Positions 44–145 are disordered; the sequence is TSPPIVPLPT…PSPLGEPMYY (102 aa).

This is an uncharacterized protein from Lepidoptera (butterflies and moths).